The primary structure comprises 586 residues: U-box domain-containing protein 73 (586 aa).

A disordered region spans residues 21–122 (KADMSGLQRS…AAGADDGPTR (102 aa)). The segment covering 50 to 60 (RSAPTSPLRTP) has biased composition (low complexity). In terms of domain architecture, U-box spans 182–258 (PIPIAHDGTL…SAWCLDHSDL (77 aa)).

It carries out the reaction S-ubiquitinyl-[E2 ubiquitin-conjugating enzyme]-L-cysteine + [acceptor protein]-L-lysine = [E2 ubiquitin-conjugating enzyme]-L-cysteine + N(6)-ubiquitinyl-[acceptor protein]-L-lysine.. It participates in protein modification; protein ubiquitination. In terms of biological role, possesses E3 ubiquitin-protein ligase in vitro. The chain is U-box domain-containing protein 73 (PUB73) from Oryza sativa subsp. japonica (Rice).